The primary structure comprises 653 residues: UvrABC system protein C (653 aa).

Positions 44–122 (NAPGVYRMVN…IKRLRPRFNV (79 aa)) constitute a GIY-YIG domain. The UVR domain occupies 232-267 (STVKAEIATAMQEASQALDFERAAIYRDRLAALSHV).

The protein belongs to the UvrC family. As to quaternary structure, interacts with UvrB in an incision complex.

The protein resides in the cytoplasm. In terms of biological role, the UvrABC repair system catalyzes the recognition and processing of DNA lesions. UvrC both incises the 5' and 3' sides of the lesion. The N-terminal half is responsible for the 3' incision and the C-terminal half is responsible for the 5' incision. This chain is UvrABC system protein C, found in Chelativorans sp. (strain BNC1).